The chain runs to 243 residues: 2-O-methyltransferase NoeI (243 aa).

This sequence belongs to the FkbM methyltransferase family.

The protein localises to the cytoplasm. Functionally, required for 2-O-methylation of the fucosyl group of Nod factors. This chain is 2-O-methyltransferase NoeI (noeI), found in Sinorhizobium fredii (strain NBRC 101917 / NGR234).